Reading from the N-terminus, the 553-residue chain is MPTVDDILEHIGEFHLFQKQTFFLLALLSGAFTPIYVGIVFLGFTPNHHCRSPGVAELSQRCGWSPAEELNYTVPGLGSAGEVSFLSQCMRYEVDWNQSTLDCVDPLSSLAANRSHLPLSPCEHGWVYDTPGSSIVTEFNLVCAHSWMLDLFQSLVNVGFFIGAVGIGYLADRFGRKFCLLVTILINAISGVLMAISPNYAWMLVFRFLQGLVSKAGWLIGYILITEFVGLGYRRTVGICYQIAFTVGLLILAGVAYALPNWRWLQFAVTLPNFCFLLYFWCIPESPRWLISQNKNAKAMKIIKHIAKKNGKSVPVSLQSLTADEDTGMKLNPSFLDLVRTPQIRKHTLILMYNWFTSSVLYQGLIMHMGLAGDNIYLDFFYSALVEFPAAFIIILTIDRIGRRYPWAVSNMVAGAACLASVFIPDDLQWLKITVACLGRMGITIAYEMVCLVNAELYPTYIRNLAVLVCSSMCDIGGIVTPFLVYRLTDIWLEFPLVVFAVVGLVAGGLVLLLPETKGKALPETIEDAEKMQRPRKKKEKRIYLQVKKAELS.

The Cytoplasmic segment spans residues 1 to 21; it reads MPTVDDILEHIGEFHLFQKQT. Residues 22–42 form a helical membrane-spanning segment; the sequence is FFLLALLSGAFTPIYVGIVFL. The Extracellular portion of the chain corresponds to 43 to 150; it reads GFTPNHHCRS…LVCAHSWMLD (108 aa). Asparagine 71 is a glycosylation site (N-linked (GlcNAc...) asparagine). Residues 151-171 traverse the membrane as a helical segment; sequence LFQSLVNVGFFIGAVGIGYLA. The Cytoplasmic portion of the chain corresponds to 172 to 177; the sequence is DRFGRK. A helical membrane pass occupies residues 178 to 198; it reads FCLLVTILINAISGVLMAISP. Topologically, residues 199-210 are extracellular; sequence NYAWMLVFRFLQ. A helical membrane pass occupies residues 211-231; it reads GLVSKAGWLIGYILITEFVGL. Residues 232–238 are Cytoplasmic-facing; the sequence is GYRRTVG. Residues 239-259 form a helical membrane-spanning segment; that stretch reads ICYQIAFTVGLLILAGVAYAL. The Extracellular segment spans residues 260-263; sequence PNWR. A helical membrane pass occupies residues 264 to 284; the sequence is WLQFAVTLPNFCFLLYFWCIP. Residues 284–288 carry the Proline-rich sequence motif; it reads PESPR. Topologically, residues 285–348 are cytoplasmic; sequence ESPRWLISQN…VRTPQIRKHT (64 aa). The helical transmembrane segment at 349 to 369 threads the bilayer; the sequence is LILMYNWFTSSVLYQGLIMHM. Residues 370-375 are Extracellular-facing; sequence GLAGDN. The chain crosses the membrane as a helical span at residues 376–396; that stretch reads IYLDFFYSALVEFPAAFIIIL. The Cytoplasmic segment spans residues 397 to 404; it reads TIDRIGRR. A helical transmembrane segment spans residues 405–425; it reads YPWAVSNMVAGAACLASVFIP. The Extracellular portion of the chain corresponds to 426–432; sequence DDLQWLK. The helical transmembrane segment at 433–453 threads the bilayer; that stretch reads ITVACLGRMGITIAYEMVCLV. At 454–464 the chain is on the cytoplasmic side; that stretch reads NAELYPTYIRN. A helical membrane pass occupies residues 465 to 485; it reads LAVLVCSSMCDIGGIVTPFLV. The Extracellular segment spans residues 486–494; sequence YRLTDIWLE. A helical membrane pass occupies residues 495-515; the sequence is FPLVVFAVVGLVAGGLVLLLP. Over 516–553 the chain is Cytoplasmic; sequence ETKGKALPETIEDAEKMQRPRKKKEKRIYLQVKKAELS.

Belongs to the major facilitator (TC 2.A.1) superfamily. Organic cation transporter (TC 2.A.1.19) family. Tyrosine phosphorylated by tyrosine-protein kinase YES1. As to expression, expressed in kidney and ureter. To a lower extent, also expressed in brain and embryo.

The protein resides in the basolateral cell membrane. It is found in the basal cell membrane. The protein localises to the apical cell membrane. It carries out the reaction (R)-noradrenaline(out) = (R)-noradrenaline(in). It catalyses the reaction (R)-adrenaline(out) = (R)-adrenaline(in). The enzyme catalyses serotonin(out) = serotonin(in). The catalysed reaction is dopamine(out) = dopamine(in). It carries out the reaction histamine(out) = histamine(in). It catalyses the reaction thiamine(in) = thiamine(out). The enzyme catalyses creatinine(in) = creatinine(out). The catalysed reaction is 1-methylnicotinamide(out) = 1-methylnicotinamide(in). It carries out the reaction guanidine(out) = guanidine(in). It catalyses the reaction choline(out) = choline(in). The enzyme catalyses agmatine(out) = agmatine(in). The catalysed reaction is putrescine(out) = putrescine(in). It carries out the reaction spermidine(in) = spermidine(out). It catalyses the reaction tyramine(in) = tyramine(out). The enzyme catalyses L-histidyl-L-proline diketopiperazine(in) = L-histidyl-L-proline diketopiperazine(out). The catalysed reaction is (R)-salsolinol(in) = (R)-salsolinol(out). It carries out the reaction N-methyl-(R)-salsolinol(in) = N-methyl-(R)-salsolinol(out). It catalyses the reaction acetylcholine(in) = acetylcholine(out). The enzyme catalyses prostaglandin F2alpha(out) = prostaglandin F2alpha(in). The catalysed reaction is prostaglandin E2(out) = prostaglandin E2(in). With respect to regulation, tyrosine phosphorylation of the transporter leads to activation of the transport activity. TEA uptake is activated by tyrosine phosphorylation. Inhibited by cGMP, most likely through a cGMP-binding protein that interacts with OCT2. Functionally, electrogenic voltage-dependent transporter that mediates the transport of a variety of organic cations such as endogenous bioactive amines, cationic drugs and xenobiotics. Functions as a Na(+)-independent, bidirectional uniporter. Cation cellular uptake or release is driven by the electrochemical potential, i.e. membrane potential and concentration gradient. However, may also engage electroneutral cation exchange when saturating concentrations of cation substrates are reached. Predominantly expressed at the basolateral membrane of hepatocytes and proximal tubules and involved in the uptake and disposition of cationic compounds by hepatic and renal clearance from the blood flow. Implicated in monoamine neurotransmitters uptake such as histamine, dopamine, adrenaline/epinephrine, noradrenaline/norepinephrine, serotonin and tyramine, thereby supporting a physiological role in the central nervous system by regulating interstitial concentrations of neurotransmitters. Also capable of transporting dopaminergic neuromodulators cyclo(his-pro), salsolinol and N-methyl-salsolinol, thereby involved in the maintenance of dopaminergic cell integrity in the central nervous system. Mediates the bidirectional transport of acetylcholine (ACh) at the apical membrane of ciliated cell in airway epithelium, thereby playing a role in luminal release of ACh from bronchial epithelium. Also transports guanidine and endogenous monoamines such as vitamin B1/thiamine, creatinine and N-1-methylnicotinamide (NMN). Mediates the uptake and efflux of quaternary ammonium compound choline. Mediates the bidirectional transport of polyamine agmatine and the uptake of polyamines putrescine and spermidine. Able to transport non-amine endogenous compounds such as prostaglandin E2 (PGE2) and prostaglandin F2-alpha (PGF2-alpha). Also involved in the uptake of xenobiotic 4-(4-(dimethylamino)styryl)-N-methylpyridinium (ASP). May contribute to regulate the transport of organic compounds in testis across the blood-testis-barrier. The protein is Solute carrier family 22 member 2 of Mus musculus (Mouse).